The chain runs to 962 residues: Replication protein 1a (962 aa).

The region spanning Leu-71 to Leu-270 is the Alphavirus-like MT domain. Positions Pro-79–Asp-356 are methyltransferase. The disordered stretch occupies residues Asp-536 to Val-561. Positions Ser-546–Val-561 are enriched in polar residues. In terms of domain architecture, (+)RNA virus helicase ATP-binding spans Asn-667 to Gln-820. Residues Leu-693–Lys-941 are ATP-dependent helicase. A (+)RNA virus helicase C-terminal domain is found at Ile-821–Cys-962.

It belongs to the bromoviridae replication protein 1a family. As to quaternary structure, interacts with RNA-directed RNA polymerase 2a.

It is found in the host endoplasmic reticulum membrane. In terms of biological role, involved in the virus replication. Contains a helicase domain and a methyltransferase domain. The methyltransferase domain is probably involved in viral RNA capping. Involved in the formation of ER membrane spherular invaginations in which RNA replication complexes form. The polypeptide is Replication protein 1a (Solanum lycopersicum (Tomato)).